We begin with the raw amino-acid sequence, 250 residues long: 2,3-bisphosphoglycerate-dependent phosphoglycerate mutase (250 aa).

Substrate contacts are provided by residues 10 to 17 (RHGESQWN), 23 to 24 (TG), arginine 62, 89 to 92 (ERHY), lysine 100, 116 to 117 (RR), and 185 to 186 (GN). Histidine 11 serves as the catalytic Tele-phosphohistidine intermediate. Glutamate 89 functions as the Proton donor/acceptor in the catalytic mechanism.

The protein belongs to the phosphoglycerate mutase family. BPG-dependent PGAM subfamily. Homodimer.

It catalyses the reaction (2R)-2-phosphoglycerate = (2R)-3-phosphoglycerate. It functions in the pathway carbohydrate degradation; glycolysis; pyruvate from D-glyceraldehyde 3-phosphate: step 3/5. Its function is as follows. Catalyzes the interconversion of 2-phosphoglycerate and 3-phosphoglycerate. The chain is 2,3-bisphosphoglycerate-dependent phosphoglycerate mutase from Escherichia coli O139:H28 (strain E24377A / ETEC).